We begin with the raw amino-acid sequence, 83 residues long: Defensin-like protein 47 (83 aa).

The first 27 residues, 1–27 (MGSTKTLVTCFLVIILAVSLPNNNVLA), serve as a signal peptide directing secretion. 4 disulfide bridges follow: C40-C81, C44-C68, C53-C79, and C57-C80.

The protein belongs to the DEFL family.

It is found in the secreted. In Arabidopsis thaliana (Mouse-ear cress), this protein is Defensin-like protein 47.